Reading from the N-terminus, the 637-residue chain is MAIEKLPPQLANQIAAGEVVERPASVIKELVENSLDAGATRVDIEIEKGGSKLIRIRDNGSGIPKADLCLALSRHATSKLKSLDDLEAILSFGFRGEALASISSVSRLILTSRTAEQAEAWQAHAEGTEMAVKVLPAAHPVGSTVEAVDLFFNTPARRRFLKSDKTEFTHIDEWLKRIALARRDIHFTLKHNGKTVRNYRPANTESQYIQRLALVCGKAFAETCLRIECQHNDLSLSGYLQSPSSANGYSETQYFYVNGRLVKDRLVNHAVRQAFAQYAEGVSPGYVLMLDLDPHQVDVNVHPAKHEVRFHQSRYVHDFILQALQSAISQSMELALNNEPEIQQSPDRQVSPTRGAVTAPLYSESIERKPSVSYDVRDSHSVTNQRDYSSGSSSYRSPLKPSARNGDVSLPSQSSIRAYGELLSTQSSSTHSDRVLSTQQNNYAVRSPAGNQNGLAASNSHAASMPAVIAGEFWVLVRDDKISLLSISMVARAVLKAEIAAKFSQGLVGQPLLMPVAVAVDDDWLAIIENREQLLRKLGIELSIRLGQLIIKKVPPYLRNSQLAVLIPELLQWIQLELPSDAAVVKWLAEQGANRFTSAGEAWFGLNALPDDVQRELYNLSQDLPWEQWMKENQSDR.

Polar residues predominate over residues 343 to 352 (QQSPDRQVSP). The interval 343–411 (QQSPDRQVSP…SARNGDVSLP (69 aa)) is disordered. The segment covering 365-380 (SIERKPSVSYDVRDSH) has biased composition (basic and acidic residues). The segment covering 388–397 (YSSGSSSYRS) has biased composition (low complexity).

This sequence belongs to the DNA mismatch repair MutL/HexB family.

Functionally, this protein is involved in the repair of mismatches in DNA. It is required for dam-dependent methyl-directed DNA mismatch repair. May act as a 'molecular matchmaker', a protein that promotes the formation of a stable complex between two or more DNA-binding proteins in an ATP-dependent manner without itself being part of a final effector complex. This is DNA mismatch repair protein MutL from Shewanella halifaxensis (strain HAW-EB4).